A 348-amino-acid chain; its full sequence is GMP reductase 2 (348 aa).

Residues 26 to 27 (SR), Lys78, 129 to 131 (DVA), and 180 to 181 (IG) contribute to the NADP(+) site. Residues Gly181, Gly183, and Cys186 each contribute to the K(+) site. Cys186 (thioimidate intermediate) is an active-site residue. Thr188 serves as the catalytic Proton donor/acceptor. Arg189 contacts K(+). GMP-binding positions include 219-221 (DGG), 242-243 (GG), 268-270 (GMS), and 286-290 (RASEG). Residues Met269 and 285–286 (YR) contribute to the NADP(+) site. Lys291 carries the post-translational modification N6-acetyllysine. 314 to 317 (STCT) is an NADP(+) binding site.

It belongs to the IMPDH/GMPR family. GuaC type 1 subfamily. Homotetramer.

It catalyses the reaction IMP + NH4(+) + NADP(+) = GMP + NADPH + 2 H(+). Catalyzes the irreversible NADPH-dependent deamination of GMP to IMP. It functions in the conversion of nucleobase, nucleoside and nucleotide derivatives of G to A nucleotides, and in maintaining the intracellular balance of A and G nucleotides. Plays a role in modulating cellular differentiation. The chain is GMP reductase 2 from Mus musculus (Mouse).